We begin with the raw amino-acid sequence, 60 residues long: Large ribosomal subunit protein bL32 (60 aa).

Over residues 1 to 16 (MAVPRRKTSPSRRGMR) the composition is skewed to basic residues. Residues 1–60 (MAVPRRKTSPSRRGMRRSADAIKKPTYVEDKDSGELRRPHHLDLKTGMYKGRQVLKKKDA) form a disordered region. Residues 17–44 (RSADAIKKPTYVEDKDSGELRRPHHLDL) are compositionally biased toward basic and acidic residues.

This sequence belongs to the bacterial ribosomal protein bL32 family.

This Bradyrhizobium sp. (strain BTAi1 / ATCC BAA-1182) protein is Large ribosomal subunit protein bL32.